The sequence spans 295 residues: Peptide transport system permease protein SapC (295 aa).

The next 6 membrane-spanning stretches (helical) occupy residues 27–47, 102–122, 129–149, 157–177, 219–239, and 262–282; these read IALFSFYLLIALIFTALFASY, LLVVFSVAIIGGALGIIAGLL, FVGHIFDAFLSLPILLIAVVI, LWNAMFATLLAILPYFIHTIY, VARAFVIAVLDISALSFISLG, and PWTVLLPGFAIIFTILLSIIF. Residues 98 to 278 enclose the ABC transmembrane type-1 domain; the sequence is LGSALLVVFS…GFAIIFTILL (181 aa).

This sequence belongs to the binding-protein-dependent transport system permease family. OppBC subfamily.

Its subcellular location is the cell inner membrane. In terms of biological role, involved in a peptide intake transport system that plays a role in the resistance to antimicrobial peptides. In Haemophilus influenzae (strain ATCC 51907 / DSM 11121 / KW20 / Rd), this protein is Peptide transport system permease protein SapC (sapC).